The following is a 117-amino-acid chain: Hydrogenase maturation factor HypA (117 aa).

H2 is a Ni(2+) binding site. Zn(2+) is bound by residues C74, C77, C91, and C94.

The protein belongs to the HypA/HybF family.

Involved in the maturation of [NiFe] hydrogenases. Required for nickel insertion into the metal center of the hydrogenase. The polypeptide is Hydrogenase maturation factor HypA (Helicobacter pylori (strain J99 / ATCC 700824) (Campylobacter pylori J99)).